The chain runs to 100 residues: Urease subunit gamma (100 aa).

This sequence belongs to the urease gamma subunit family. In terms of assembly, heterotrimer of UreA (gamma), UreB (beta) and UreC (alpha) subunits. Three heterotrimers associate to form the active enzyme.

The protein resides in the cytoplasm. The enzyme catalyses urea + 2 H2O + H(+) = hydrogencarbonate + 2 NH4(+). The protein operates within nitrogen metabolism; urea degradation; CO(2) and NH(3) from urea (urease route): step 1/1. The chain is Urease subunit gamma from Pseudomonas putida (strain ATCC 700007 / DSM 6899 / JCM 31910 / BCRC 17059 / LMG 24140 / F1).